The chain runs to 264 residues: Chanoclavine-I dehydrogenase easD (264 aa).

Residues 1 to 20 form the signal peptide; it reads MASVSSKIFAITGGASGIGA. NADP(+) is bound by residues isoleucine 18, aspartate 66, arginine 132, tyrosine 169, lysine 173, and threonine 204. Tyrosine 169 acts as the Proton donor in catalysis. Lysine 173 (lowers pKa of active site Tyr) is an active-site residue.

Belongs to the short-chain dehydrogenases/reductases (SDR) family. Homotetramer.

The catalysed reaction is chanoclavine-I + NAD(+) = chanoclavine-I aldehyde + NADH + H(+). It participates in alkaloid biosynthesis; ergot alkaloid biosynthesis. Functionally, chanoclavine-I dehydrogenase; part of the gene cluster that mediates the biosynthesis of fungal ergot alkaloid. DmaW catalyzes the first step of ergot alkaloid biosynthesis by condensing dimethylallyl diphosphate (DMAP) and tryptophan to form 4-dimethylallyl-L-tryptophan. The second step is catalyzed by the methyltransferase easF that methylates 4-dimethylallyl-L-tryptophan in the presence of S-adenosyl-L-methionine, resulting in the formation of 4-dimethylallyl-L-abrine. The catalase easC and the FAD-dependent oxidoreductase easE then transform 4-dimethylallyl-L-abrine to chanoclavine-I which is further oxidized by easD in the presence of NAD(+), resulting in the formation of chanoclavine-I aldehyde. Chanoclavine-I aldehyde is the precursor of ergoamides and ergopeptines in Clavicipitaceae, and clavine-type alcaloids such as fumiclavine in Trichocomaceae. However, the metabolites downstream of chanoclavine-I aldehyde in Arthrodermataceae have not been identified yet. This Arthroderma otae (strain ATCC MYA-4605 / CBS 113480) (Microsporum canis) protein is Chanoclavine-I dehydrogenase easD.